The following is a 545-amino-acid chain: Carboxypeptidase Y homolog A (545 aa).

The first 17 residues, 1–17, serve as a signal peptide directing secretion; the sequence is MKSLALALLVGGAIAAG. The propeptide occupies 18–123; sequence PQQQVLQAPV…KLEAYDLRVK (106 aa). Intrachain disulfides connect C177/C416, C311/C325, C335/C358, C342/C351, and C380/C386. N208 is a glycosylation site (N-linked (GlcNAc...) asparagine). S264 is a catalytic residue. The active site involves D455. N-linked (GlcNAc...) asparagine glycosylation is found at N485, N491, and N506. Residue H517 is part of the active site.

The protein belongs to the peptidase S10 family.

The protein resides in the vacuole. The catalysed reaction is Release of a C-terminal amino acid with broad specificity.. Its function is as follows. Vacuolar carboxypeptidase involved in degradation of small peptides. Digests preferentially peptides containing an aliphatic or hydrophobic residue in P1' position, as well as methionine, leucine or phenylalanine in P1 position of ester substrate. The chain is Carboxypeptidase Y homolog A (CPYA) from Ajellomyces dermatitidis (strain ER-3 / ATCC MYA-2586) (Blastomyces dermatitidis).